Here is a 124-residue protein sequence, read N- to C-terminus: Mini zinc finger protein 4 (124 aa).

The ZF-HD dimerization-type; degenerate zinc finger occupies 35–84 (YGECRRNHAARMGGHAVDGCREFLAEGEEGTGGALRCAACGCHRSFHRRV).

Homo- and heterodimers.

It localises to the cytoplasm. Its function is as follows. Inhibits zinc finger homeodomain (ZHD) transcription factors, by interacting with them to prevent both their nuclear localization and their DNA-binding properties. This Oryza sativa subsp. japonica (Rice) protein is Mini zinc finger protein 4 (MIF4).